The chain runs to 943 residues: Isoleucine--tRNA ligase (943 aa).

A 'HIGH' region motif is present at residues 58–68 (PYANGNIHIGH). L-isoleucyl-5'-AMP is bound at residue Glu-567. The 'KMSKS' region signature appears at 608-612 (KMSKS). Position 611 (Lys-611) interacts with ATP. 4 residues coordinate Zn(2+): Cys-906, Cys-909, Cys-926, and Cys-929.

The protein belongs to the class-I aminoacyl-tRNA synthetase family. IleS type 1 subfamily. In terms of assembly, monomer. Zn(2+) serves as cofactor.

It is found in the cytoplasm. It carries out the reaction tRNA(Ile) + L-isoleucine + ATP = L-isoleucyl-tRNA(Ile) + AMP + diphosphate. Its function is as follows. Catalyzes the attachment of isoleucine to tRNA(Ile). As IleRS can inadvertently accommodate and process structurally similar amino acids such as valine, to avoid such errors it has two additional distinct tRNA(Ile)-dependent editing activities. One activity is designated as 'pretransfer' editing and involves the hydrolysis of activated Val-AMP. The other activity is designated 'posttransfer' editing and involves deacylation of mischarged Val-tRNA(Ile). The sequence is that of Isoleucine--tRNA ligase from Pseudomonas savastanoi pv. phaseolicola (strain 1448A / Race 6) (Pseudomonas syringae pv. phaseolicola (strain 1448A / Race 6)).